The sequence spans 248 residues: 14-3-3-like protein G-BOX factor 14 lambda (248 aa).

Phosphoserine; by CRPK1 is present on residues S70, S112, and S193. Phosphothreonine; by CRPK1 is present on T214.

It belongs to the 14-3-3 family. As to quaternary structure, interacts with SERK1 in the cell membrane. Component of the SERK1 signaling complex, composed of KAPP, CDC48A, GRF6 or GRF7, SERK1, SERK2, SERK3/BAK1 and BRI1. Interacts with TPK1. Interacts with ADF1. Binds to CRPK1 at the plasma membrane. Interacts with DREB1A and DREB1B in the nucleus when activated by CRPK1-mediated phosphorylation upon freezing. Interacts with CINV1. Binds to the N-terminal region of B1L. Transphosphorylated by SERK1. Post-translationally, phosphorylated by CRPK1 in response to cold.

It localises to the nucleus. The protein localises to the cell membrane. The protein resides in the cytoplasm. Its function is as follows. Is associated with a DNA binding complex that binds to the G box, a well-characterized cis-acting DNA regulatory element found in plant genes. Specific negative regulator of slow-vacuolar (SV) ion channel. Mediates F-actin dynamics possibly through inhibiting ADF1 phosphorylation. Negative regulator of freezing tolerance that modulates cold-responsive C-repeat-binding factors (CBF) DREB1A and DREB1B proteins stability by facilitating their ubiquitin-mediated degradation when activated by CRPK1-mediated phosphorylation in freezing conditions; this processus is counteracted by B1L. This Arabidopsis thaliana (Mouse-ear cress) protein is 14-3-3-like protein G-BOX factor 14 lambda.